The chain runs to 310 residues: 2-ketogluconate reductase (310 aa).

NADP(+)-binding positions include 151 to 152 (HI) and 227 to 229 (IAR). Active-site residues include R229 and E258. Residue H276 is the Proton donor of the active site.

Belongs to the D-isomer specific 2-hydroxyacid dehydrogenase family. As to quaternary structure, homohexamer.

The catalysed reaction is D-gluconate + NADP(+) = 2-dehydro-D-gluconate + NADPH + H(+). Functionally, catalyzes the reduction of 2-keto-D-gluconate to gluconate. Can also catalyze the reduction of 2-keto-L-gulonate. Can use both NADH and NADPH efficiently, with a slight preference for NADPH. This Gluconobacter oxydans (strain 621H) (Gluconobacter suboxydans) protein is 2-ketogluconate reductase.